A 480-amino-acid polypeptide reads, in one-letter code: CASP8 and FADD-like apoptosis regulator (480 aa).

DED domains lie at 1–73 (MSAE…RILK) and 92–170 (DYRV…KIQK). The segment at 1 to 195 (MSAEVIHQVE…LQAAIQKSLK (195 aa)) is interaction with CASP8. Residues 1–227 (MSAEVIHQVE…GAQQEPVKKS (227 aa)) are interaction with FADD. Residues 1-305 (MSAEVIHQVE…FACMPEHRDY (305 aa)) are interaction with CASP8 propeptide. Positions 1 to 435 (MSAEVIHQVE…CLSQKLRQER (435 aa)) are not proteolytically processed and involved in apoptosis inhibition. The segment at 192 to 435 (KSLKDPSNNF…CLSQKLRQER (244 aa)) is interaction with CASP3. Positions 192-480 (KSLKDPSNNF…LRKKLILSYT (289 aa)) are interaction with TRAF1 and TRAF2. The segment at 217–480 (LGAQQEPVKK…LRKKLILSYT (264 aa)) is interaction with CASP8 subunits p18 and p10. Residues 263-358 (ETELLRDTFT…AGKPKMFFIQ (96 aa)) form a caspase region. Positions 370 to 480 (SSLLEVDGPA…LRKKLILSYT (111 aa)) are interaction with CASP8.

The protein belongs to the peptidase C14A family. As to quaternary structure, TNFRSF6 stimulation triggers recruitment to the death-inducing signaling complex (DISC) formed by TNFRSF6, FADD and CASP8. A proteolytic fragment (p43) stays associated with the DISC. Also interacts with FADD, CASP8, CASP3, TRAF1, TRAF2 and Bcl-X(L) (in vitro). Interacts with RIPK1. In terms of assembly, (Microbial infection) Interacts with HBV protein X. Post-translationally, proteolytically processed by CASP8 generating subunit p43 and p12. In terms of tissue distribution, widely expressed. Higher expression in skeletal muscle, pancreas, heart, kidney, placenta, and peripheral blood leukocytes. Also detected in diverse cell lines. Isoform 8 is predominantly expressed in testis and skeletal muscle.

Its function is as follows. Apoptosis regulator protein which may function as a crucial link between cell survival and cell death pathways in mammalian cells. Acts as an inhibitor of TNFRSF6 mediated apoptosis. A proteolytic fragment (p43) is likely retained in the death-inducing signaling complex (DISC) thereby blocking further recruitment and processing of caspase-8 at the complex. Full length and shorter isoforms have been shown either to induce apoptosis or to reduce TNFRSF-triggered apoptosis. Lacks enzymatic (caspase) activity. The polypeptide is CASP8 and FADD-like apoptosis regulator (CFLAR) (Homo sapiens (Human)).